The primary structure comprises 255 residues: NAD-dependent protein deacylase (255 aa).

A Deacetylase sirtuin-type domain is found at 1-253 (MIEEAPRIIA…VKVKRCLENK (253 aa)). 20 to 39 (GAGVSAESGIPTFRDRGGLW) provides a ligand contact to NAD(+). Substrate-binding residues include Y64 and R67. 98–101 (QNID) provides a ligand contact to NAD(+). The Proton acceptor role is filled by H116. Residues C124, C127, C151, and C154 each coordinate Zn(2+). NAD(+) is bound by residues 191–193 (GTS), 217–219 (NTK), and A235.

Belongs to the sirtuin family. Class III subfamily. Zn(2+) serves as cofactor.

The protein localises to the cytoplasm. It catalyses the reaction N(6)-acetyl-L-lysyl-[protein] + NAD(+) + H2O = 2''-O-acetyl-ADP-D-ribose + nicotinamide + L-lysyl-[protein]. The catalysed reaction is N(6)-succinyl-L-lysyl-[protein] + NAD(+) + H2O = 2''-O-succinyl-ADP-D-ribose + nicotinamide + L-lysyl-[protein]. In terms of biological role, NAD-dependent lysine deacetylase and desuccinylase that specifically removes acetyl and succinyl groups on target proteins. Modulates the activities of several proteins which are inactive in their acylated form. Deacetylates the N-terminal lysine residue of Alba, the major archaeal chromatin protein and that, in turn, increases Alba's DNA binding affinity, thereby repressing transcription. This Thermococcus sibiricus (strain DSM 12597 / MM 739) protein is NAD-dependent protein deacylase.